The sequence spans 346 residues: Hydroxycarboxylic acid receptor 1 (346 aa).

Topologically, residues 1 to 21 (MYNGSCCRIEGDTISQVMPPL) are extracellular. Residue Asn3 is glycosylated (N-linked (GlcNAc...) asparagine). Residues 22–42 (LIVAFVLGALGNGVALCGFCF) traverse the membrane as a helical segment. Residues 43-49 (HMKTWKP) lie on the Cytoplasmic side of the membrane. Residues 50–70 (STVYLFNLAVADFLLMICLPF) form a helical membrane-spanning segment. Residues 71-89 (RTDYYLRRRHWAFGDIPCR) are Extracellular-facing. A disulfide bond links Cys88 and Cys165. Residues 90–110 (VGLFTLAMNRAGSIVFLTVVA) form a helical membrane-spanning segment. The Cytoplasmic portion of the chain corresponds to 111–130 (ADRYFKVVHPHHAVNTISTR). A helical transmembrane segment spans residues 131-151 (VAAGIVCTLWALVILGTVYLL). Residues 152 to 182 (LENHLCVQETAVSCESFIMESANGWHDIMFQ) are Extracellular-facing. The helical transmembrane segment at 183-203 (LEFFMPLGIILFCSFKIVWSL) threads the bilayer. Over 204 to 220 (RRRQQLARQARMKKATR) the chain is Cytoplasmic. Residues 221 to 241 (FIMVVAIVFITCYLPSVSARL) traverse the membrane as a helical segment. Topologically, residues 242-261 (YFLWTVPSSACDPSVHGALH) are extracellular. A helical transmembrane segment spans residues 262-281 (ITLSFTYMNSMLDPLVYYFS). Residues 282 to 346 (SPSFPKFYNK…QWDPHIVEWH (65 aa)) lie on the Cytoplasmic side of the membrane.

The protein belongs to the G-protein coupled receptor 1 family. Expressed abundantly in brown and white fat. It also detectable at lower levels in liver, kidney, skeletal muscle, brain and pituitary. Not detected in frontal, temporal and occipital lobes of the cortex, basal forebrain, caudate nucleus, nucleus accumbens and hippocampus.

It localises to the cell membrane. In terms of biological role, acts as a receptor for L-lactate and mediates its anti-lipolytic effect through a G(i)-protein-mediated pathway. This Homo sapiens (Human) protein is Hydroxycarboxylic acid receptor 1 (HCAR1).